The sequence spans 424 residues: 3-oxo-tetronate kinase (424 aa).

Residues Ser264, 363 to 366 (GGET), and Gly408 each bind ATP.

It belongs to the four-carbon acid sugar kinase family.

It carries out the reaction 3-dehydro-L-erythronate + ATP = 3-dehydro-4-O-phospho-L-erythronate + ADP + H(+). The enzyme catalyses 3-dehydro-D-erythronate + ATP = 3-dehydro-4-O-phospho-D-erythronate + ADP + H(+). In terms of biological role, catalyzes the ATP-dependent phosphorylation of 3-oxo-tetronate to 3-oxo-tetronate 4-phosphate. The polypeptide is 3-oxo-tetronate kinase (Methylobacterium radiotolerans (strain ATCC 27329 / DSM 1819 / JCM 2831 / NBRC 15690 / NCIMB 10815 / 0-1)).